Consider the following 370-residue polypeptide: Holliday junction branch migration complex subunit RuvB (370 aa).

The tract at residues 1–53 (MAILSSQKQPLEPEPSKNPQSVQQPGLPPSTPEQGLLTAEVSPEERLSRTDDI) is disordered. Residues 13–214 (PEPSKNPQSV…FGLIQRLRFY (202 aa)) are large ATPase domain (RuvB-L). Residues 43–53 (PEERLSRTDDI) show a composition bias toward basic and acidic residues. ATP-binding positions include Ile-53, Arg-54, Gly-95, Lys-98, Thr-99, Thr-100, 161–163 (EDF), Arg-204, Tyr-214, and Arg-251. Residue Thr-99 participates in Mg(2+) binding. The tract at residues 215–285 (EPEELSQIIL…IASEALQLFN (71 aa)) is small ATPAse domain (RuvB-S). The segment at 288 to 370 (PCGLDWTDRR…TPPDGQLSLL (83 aa)) is head domain (RuvB-H). DNA-binding residues include Arg-343 and Arg-348.

This sequence belongs to the RuvB family. Homohexamer. Forms an RuvA(8)-RuvB(12)-Holliday junction (HJ) complex. HJ DNA is sandwiched between 2 RuvA tetramers; dsDNA enters through RuvA and exits via RuvB. An RuvB hexamer assembles on each DNA strand where it exits the tetramer. Each RuvB hexamer is contacted by two RuvA subunits (via domain III) on 2 adjacent RuvB subunits; this complex drives branch migration. In the full resolvosome a probable DNA-RuvA(4)-RuvB(12)-RuvC(2) complex forms which resolves the HJ.

The protein resides in the cytoplasm. The catalysed reaction is ATP + H2O = ADP + phosphate + H(+). Its function is as follows. The RuvA-RuvB-RuvC complex processes Holliday junction (HJ) DNA during genetic recombination and DNA repair, while the RuvA-RuvB complex plays an important role in the rescue of blocked DNA replication forks via replication fork reversal (RFR). RuvA specifically binds to HJ cruciform DNA, conferring on it an open structure. The RuvB hexamer acts as an ATP-dependent pump, pulling dsDNA into and through the RuvAB complex. RuvB forms 2 homohexamers on either side of HJ DNA bound by 1 or 2 RuvA tetramers; 4 subunits per hexamer contact DNA at a time. Coordinated motions by a converter formed by DNA-disengaged RuvB subunits stimulates ATP hydrolysis and nucleotide exchange. Immobilization of the converter enables RuvB to convert the ATP-contained energy into a lever motion, pulling 2 nucleotides of DNA out of the RuvA tetramer per ATP hydrolyzed, thus driving DNA branch migration. The RuvB motors rotate together with the DNA substrate, which together with the progressing nucleotide cycle form the mechanistic basis for DNA recombination by continuous HJ branch migration. Branch migration allows RuvC to scan DNA until it finds its consensus sequence, where it cleaves and resolves cruciform DNA. This Cyanothece sp. (strain PCC 7425 / ATCC 29141) protein is Holliday junction branch migration complex subunit RuvB.